The primary structure comprises 397 residues: uncharacterized protein (397 aa).

A run of 9 helical transmembrane segments spans residues 1-21 (MGAS…LMLV), 39-59 (VIQS…VVVF), 76-96 (EALS…FGVP), 103-123 (VLLF…FVGA), 124-144 (ALIE…LVMA), 194-214 (MMTP…LFAF), 219-239 (ALFG…FSLL), 255-275 (LVYL…KLML), and 301-321 (QSLT…FWSA).

Belongs to the TerC family.

The protein localises to the cell membrane. This is an uncharacterized protein from Mycobacterium tuberculosis (strain CDC 1551 / Oshkosh).